A 901-amino-acid polypeptide reads, in one-letter code: Protein translocase subunit SecA (901 aa).

ATP contacts are provided by residues Gln85, 103-107 (GEGKT), and Asp510. The tract at residues 848 to 901 (RINQNNLPVDENSQTTQNSETEDYSDRRIGRNEPCPCGSGKKYKHCHGSRVARQ) is disordered. A compositionally biased stretch (polar residues) spans 849–866 (INQNNLPVDENSQTTQNS). Residues Cys882, Cys884, Cys893, and His894 each coordinate Zn(2+). The span at 888-901 (KKYKHCHGSRVARQ) shows a compositional bias: basic residues.

It belongs to the SecA family. As to quaternary structure, monomer and homodimer. Part of the essential Sec protein translocation apparatus which comprises SecA, SecYEG and auxiliary proteins SecDF-YajC and YidC. Forms a complex with SecB. Zn(2+) is required as a cofactor.

The protein resides in the cell inner membrane. Its subcellular location is the cytoplasm. The enzyme catalyses ATP + H2O + cellular proteinSide 1 = ADP + phosphate + cellular proteinSide 2.. In terms of biological role, part of the Sec protein translocase complex. Interacts with the SecYEG preprotein conducting channel. Has a central role in coupling the hydrolysis of ATP to the transfer of proteins into and across the cell membrane, serving both as a receptor for the preprotein-SecB complex and as an ATP-driven molecular motor driving the stepwise translocation of polypeptide chains across the membrane. This is Protein translocase subunit SecA from Haemophilus influenzae (strain ATCC 51907 / DSM 11121 / KW20 / Rd).